A 294-amino-acid polypeptide reads, in one-letter code: ATP synthase gamma chain (294 aa).

Belongs to the ATPase gamma chain family. F-type ATPases have 2 components, CF(1) - the catalytic core - and CF(0) - the membrane proton channel. CF(1) has five subunits: alpha(3), beta(3), gamma(1), delta(1), epsilon(1). CF(0) has three main subunits: a, b and c.

It localises to the cell inner membrane. Produces ATP from ADP in the presence of a proton gradient across the membrane. The gamma chain is believed to be important in regulating ATPase activity and the flow of protons through the CF(0) complex. The protein is ATP synthase gamma chain of Paraburkholderia phytofirmans (strain DSM 17436 / LMG 22146 / PsJN) (Burkholderia phytofirmans).